A 218-amino-acid polypeptide reads, in one-letter code: Eukaryotic translation initiation factor 4E-1 (218 aa).

The tract at residues 1–39 is disordered; it reads MAEETDTRPASAGSRGRPAPEDDDREEGEITDLACAPSP. Acidic residues predominate over residues 21 to 30; the sequence is EDDDREEGEI. EIF4G-binding stretches follow at residues 43 to 46 and 53 to 89; these read HPLE and FDNPQSKSKQAAWGSSIRPIHTFSTVEEFWGLYNNIN. MRNA-binding positions include 61-66, Lys93, and 111-112; these read KQAAWG and WE. An intrachain disulfide couples Cys116 to Cys154. The EIF4G-binding stretch occupies residues 137–146; the sequence is HTLLAMIGEQ. MRNA contacts are provided by residues 161–166 and 206–210; these read RGKQER and KKMDK.

It belongs to the eukaryotic initiation factor 4E family. In terms of assembly, EIF4F is a multi-subunit complex, the composition of which varies with external and internal environmental conditions. It is composed of at least EIF4A, EIF4E and EIF4G. EIF4E is also known to interact with other partners. In higher plants two isoforms of EIF4F have been identified, named isoform EIF4F and isoform EIF(iso)4F. Isoform EIF4F has subunits p220 and p26, whereas isoform EIF(iso)4F has subunits p82 and p28. In terms of processing, according to the redox status, the Cys-116-Cys-154 disulfide bridge may have a role in regulating protein function by affecting its ability to bind capped mRNA. Post-translationally, phosphorylated upon oxygen deprivation.

The protein resides in the nucleus. The protein localises to the cytoplasm. Component of the protein complex eIF4F, which is involved in the recognition of the mRNA cap, ATP-dependent unwinding of 5'-terminal secondary structure and recruitment of mRNA to the ribosome. Recognizes and binds the 7-methylguanosine-containing mRNA cap during an early step in the initiation of protein synthesis and facilitates ribosome binding by inducing the unwinding of the mRNAs secondary structures. This is Eukaryotic translation initiation factor 4E-1 from Zea mays (Maize).